The primary structure comprises 503 residues: MQRSNARSRSNINSDMVDPPEVQTSPGNHRSSPSTAAKPKSKRTKSIIFVIVACVTIALGLLFIGYSILRSGRNRRVSLHYSVIIDGGSSGTRVHVFGYRIESGKPVFDFGEENYASLKLSPGLSAYADNPEGVSESVTELVEFAKKRVHKGKLKKSDIRLMATAGMRLLELPVQEQILDVTRRVLRSSGFDFRDEWASVISGSDEGVYAWVVANHALGSLGGEPLKTTGIVELGGASAQVTFVSTELVPSEFSRTLAYGNVSYNLYSHSFLDFGQDAAQEKLSESLYNSAANSTGEGIVPDPCIPKGYILETNLQKDLPGFLADKGKFTATLQAAGNFSECRSAAFAMLQEEKGKCTYKRCSIGSIFTPNLQGSFLATENFFHTSKFFGLGEKEWLSEMILAGKRFCGEEWSKLKVKYPTFKDENLLRYCFSSAYIISMLHDSLGVALDDERIKYASKAGEEDIPLDWALGAFILNTATATFDYSGKSRKILDLSNVAKYKI.

Over residues 1–14 (MQRSNARSRSNINS) the composition is skewed to low complexity. The tract at residues 1–39 (MQRSNARSRSNINSDMVDPPEVQTSPGNHRSSPSTAAKP) is disordered. Residues 1–45 (MQRSNARSRSNINSDMVDPPEVQTSPGNHRSSPSTAAKPKSKRTK) lie on the Cytoplasmic side of the membrane. The helical; Signal-anchor for type II membrane protein transmembrane segment at 46–66 (SIIFVIVACVTIALGLLFIGY) threads the bilayer. Residues 67-503 (SILRSGRNRR…DLSNVAKYKI (437 aa)) lie on the Extracellular side of the membrane. 83 to 93 (VIIDGGSSGTR) lines the ATP pocket. E206 serves as the catalytic Proton acceptor. Residue 230-240 (GIVELGGASAQ) coordinates ATP. N-linked (GlcNAc...) asparagine glycans are attached at residues N261, N293, and N338.

The protein belongs to the GDA1/CD39 NTPase family. It depends on Ca(2+) as a cofactor. In terms of tissue distribution, expressed both in the primary root and lateral root but not in the rosette leaves.

It is found in the membrane. The enzyme catalyses a ribonucleoside 5'-triphosphate + 2 H2O = a ribonucleoside 5'-phosphate + 2 phosphate + 2 H(+). In terms of biological role, catalyzes the hydrolysis of phosphoanhydride bonds of nucleoside tri- and di-phosphates. This Arabidopsis thaliana (Mouse-ear cress) protein is Probable apyrase 4 (APY4).